The primary structure comprises 501 residues: ATP synthase subunit alpha (501 aa).

Residue 170–177 coordinates ATP; it reads GDRQTGKS.

The protein belongs to the ATPase alpha/beta chains family. As to quaternary structure, F-type ATPases have 2 components, CF(1) - the catalytic core - and CF(0) - the membrane proton channel. CF(1) has five subunits: alpha(3), beta(3), gamma(1), delta(1), epsilon(1). CF(0) has three main subunits: a(1), b(2) and c(9-12). The alpha and beta chains form an alternating ring which encloses part of the gamma chain. CF(1) is attached to CF(0) by a central stalk formed by the gamma and epsilon chains, while a peripheral stalk is formed by the delta and b chains.

Its subcellular location is the cell membrane. The enzyme catalyses ATP + H2O + 4 H(+)(in) = ADP + phosphate + 5 H(+)(out). Produces ATP from ADP in the presence of a proton gradient across the membrane. The alpha chain is a regulatory subunit. The chain is ATP synthase subunit alpha from Acholeplasma laidlawii (strain PG-8A).